A 145-amino-acid polypeptide reads, in one-letter code: MWKLCLRLLAVLAVCLSTATQAQSDLFLLSPKRSGAPQPVARYCGEKLSNALKLVCRGNYNTMFKKASQDVSDSESEDNYWSGQSADEAAEAAAAALPPYPILARPSAGGLLTGAVFRRRTRGVFDECCRKSCSISELQTYCGRR.

The segment at residues 1–19 (MWKLCLRLLAVLAVCLSTA) is a signal peptide (or 22). 2 propeptides span residues 20-33 (TQAQSDLFLLSPKR) and 117-122 (FRRRTR). 3 disulfides stabilise this stretch: cysteine 44–cysteine 129, cysteine 56–cysteine 142, and cysteine 128–cysteine 133.

Belongs to the insulin family. Heterodimer of a B chain and an A chain linked by two disulfide bonds.

It is found in the secreted. The protein is LIRP of Locusta migratoria (Migratory locust).